We begin with the raw amino-acid sequence, 49 residues long: U1-theraphotoxin-Lp1b (49 aa).

4 cysteine pairs are disulfide-bonded: Cys-4–Cys-17, Cys-8–Cys-41, Cys-22–Cys-24, and Cys-35–Cys-46.

As to expression, expressed by the venom gland.

Its subcellular location is the secreted. Toxin that causes irreversible contractile paralysis into adult Aedes aegypti resulting in 100% mortality after 24 hours. The sequence is that of U1-theraphotoxin-Lp1b from Lasiodora parahybana (Brazilian salmon pink birdeater).